Consider the following 395-residue polypeptide: E3 ubiquitin-protein ligase RDUF1 (395 aa).

Disordered stretches follow at residues 1 to 22 (MMPNSRSATITPTTESTTTTTT) and 107 to 130 (PVIVLHGGGGGGAGERVENEEGDG). Residues 9–22 (TITPTTESTTTTTT) are compositionally biased toward low complexity. Basic and acidic residues predominate over residues 121 to 130 (ERVENEEGDG). The segment at 215–256 (CAVCTEVFEAGIEGREMPCKHIFHGDCIVPWLSIRNSCPVCR) adopts an RING-type; atypical zinc-finger fold.

Expressed in root tips, leaf tips, junction of carpels and pedicels, stigma, anthers, pollen, vasculature of sepals and petals, immature seeds and embryos.

The protein localises to the cytoplasm. The protein resides in the cytosol. It is found in the nucleus. The catalysed reaction is S-ubiquitinyl-[E2 ubiquitin-conjugating enzyme]-L-cysteine + [acceptor protein]-L-lysine = [E2 ubiquitin-conjugating enzyme]-L-cysteine + N(6)-ubiquitinyl-[acceptor protein]-L-lysine.. Its pathway is protein modification; protein ubiquitination. In terms of biological role, E3 ubiquitin-protein ligase involved in the positive regulation of abscisic acid-dependent drought stress responses. Involved in the positive regulation of responses to salt and osmotic stresses during seed germination and early seedling development. Possesses E3 ubiquitin ligase activity in vitro. In Arabidopsis thaliana (Mouse-ear cress), this protein is E3 ubiquitin-protein ligase RDUF1.